A 501-amino-acid chain; its full sequence is Pentatricopeptide repeat-containing protein At4g14190, chloroplastic (501 aa).

The transit peptide at 1–88 directs the protein to the chloroplast; it reads MENLTTAQFL…SGSCPLRLLQ (88 aa). PPR repeat units follow at residues 130 to 160, 166 to 200, 201 to 235, 236 to 270, and 271 to 305; these read SENN…MIDD, SLEI…GLLP, ITET…GCVR, DHVT…KMTL, and EPST…GISL.

Belongs to the PPR family. P subfamily.

Its subcellular location is the plastid. It localises to the chloroplast. This chain is Pentatricopeptide repeat-containing protein At4g14190, chloroplastic, found in Arabidopsis thaliana (Mouse-ear cress).